Reading from the N-terminus, the 107-residue chain is U1-lycotoxin-Ls1w (107 aa).

Positions 1 to 20 (MLKVLVVVALLVTLISYSSS) are cleaved as a signal peptide. A propeptide spanning residues 21-41 (EGIDDLEADELLSLMANEQTR) is cleaved from the precursor. 4 cysteine pairs are disulfide-bonded: C44–C59, C51–C68, C58–C86, and C70–C84.

It belongs to the neurotoxin 19 (CSTX) family. 04 (U1-Lctx) subfamily. In terms of tissue distribution, expressed by the venom gland.

It is found in the secreted. In Lycosa singoriensis (Wolf spider), this protein is U1-lycotoxin-Ls1w.